We begin with the raw amino-acid sequence, 284 residues long: NADH-cytochrome b5 reductase 1 (284 aa).

The chain crosses the membrane as a helical span at residues 8 to 28 (PFIIFATVAAIISSAVAYYFF). In terms of domain architecture, FAD-binding FR-type spans 41–144 (NDFQKFPLIE…RGPKGFFTYT (104 aa)). FAD contacts are provided by residues 124–139 (ESKK…GPKG) and 150–182 (SFGM…KVSL).

It belongs to the flavoprotein pyridine nucleotide cytochrome reductase family. Monomer. Component of the 2-(3-amino-3-carboxypropyl)histidine synthase complex composed of DPH1, DPH2, DPH3 and a NADH-dependent reductase, predominantly CBR1. Requires FAD as cofactor.

The protein resides in the mitochondrion outer membrane. It catalyses the reaction 2 Fe(III)-[cytochrome b5] + NADH = 2 Fe(II)-[cytochrome b5] + NAD(+) + H(+). The enzyme catalyses 2 Fe(3+)-[Dph3] + NADH = 2 Fe(2+)-[Dph3] + NAD(+) + H(+). Its pathway is protein modification; peptidyl-diphthamide biosynthesis. NADH-dependent reductase for DPH3 and cytochrome b5. Required for the first step of diphthamide biosynthesis, a post-translational modification of histidine which occurs in elongation factor 2. DPH1 and DPH2 transfer a 3-amino-3-carboxypropyl (ACP) group from S-adenosyl-L-methionine (SAM) to a histidine residue, the reaction is assisted by a reduction system comprising DPH3 and a NADH-dependent reductase, predominantly CBR1. By reducing DPH3, also involved in the formation of the tRNA wobble base modification mcm5s 2U (5-methoxycarbonylmethyl-2-thiouridine), mediated by the elongator complex. The cytochrome b5/NADH cytochrome b5 reductase electron transfer system supports the catalytic activity of several sterol biosynthetic enzymes. This chain is NADH-cytochrome b5 reductase 1 (CBR1), found in Debaryomyces hansenii (strain ATCC 36239 / CBS 767 / BCRC 21394 / JCM 1990 / NBRC 0083 / IGC 2968) (Yeast).